The following is a 472-amino-acid chain: Radical SAM cyclopropyl synthase TigE (472 aa).

The Radical SAM core domain maps to 106–331; that stretch reads GEQIKAIQLV…VIDLYEYGLD (226 aa). [4Fe-4S] cluster contacts are provided by C120, C124, C127, Y339, C360, C378, C414, C417, C423, C427, and C446.

This sequence belongs to the radical SAM superfamily. [4Fe-4S] cluster serves as cofactor.

It carries out the reaction L-isoleucyl-[protein] + AH2 + 2 S-adenosyl-L-methionine = methylcyclopropylglycine-[protein] + 2 5'-deoxyadenosine + 2 L-methionine + A + 2 H(+). Functionally, radical S-adenosylmethionine (SAM) enzyme that catalyzes the formation of methylcyclopropylglycine (mCPG) residues from isoleucine residues residing in the repeating TIGSVS motif of the precursor peptide TigB. Is thus involved in the maturation of a ribosomally synthesized and post-translationally modified peptide (RiPP). The protein is Radical SAM cyclopropyl synthase TigE of Paramaledivibacter caminithermalis (strain DSM 15212 / CIP 107654 / DViRD3) (Clostridium caminithermale).